A 236-amino-acid polypeptide reads, in one-letter code: Biosynthetic peptidoglycan transglycosylase (236 aa).

A helical membrane pass occupies residues Ala-12–Pro-31.

This sequence belongs to the glycosyltransferase 51 family.

Its subcellular location is the cell inner membrane. The catalysed reaction is [GlcNAc-(1-&gt;4)-Mur2Ac(oyl-L-Ala-gamma-D-Glu-L-Lys-D-Ala-D-Ala)](n)-di-trans,octa-cis-undecaprenyl diphosphate + beta-D-GlcNAc-(1-&gt;4)-Mur2Ac(oyl-L-Ala-gamma-D-Glu-L-Lys-D-Ala-D-Ala)-di-trans,octa-cis-undecaprenyl diphosphate = [GlcNAc-(1-&gt;4)-Mur2Ac(oyl-L-Ala-gamma-D-Glu-L-Lys-D-Ala-D-Ala)](n+1)-di-trans,octa-cis-undecaprenyl diphosphate + di-trans,octa-cis-undecaprenyl diphosphate + H(+). Its pathway is cell wall biogenesis; peptidoglycan biosynthesis. Its function is as follows. Peptidoglycan polymerase that catalyzes glycan chain elongation from lipid-linked precursors. This Pseudomonas putida (strain ATCC 47054 / DSM 6125 / CFBP 8728 / NCIMB 11950 / KT2440) protein is Biosynthetic peptidoglycan transglycosylase.